The primary structure comprises 342 residues: GTP 3',8-cyclase (342 aa).

Residues 18–247 (GFSRRFYYLR…QLRGADDGPA (230 aa)) enclose the Radical SAM core domain. GTP is bound at residue Arg27. 2 residues coordinate [4Fe-4S] cluster: Cys34 and Cys38. An S-adenosyl-L-methionine-binding site is contributed by Tyr40. [4Fe-4S] cluster is bound at residue Cys41. Arg81 is a binding site for GTP. Gly85 lines the S-adenosyl-L-methionine pocket. Thr112 contributes to the GTP binding site. Residue Ser136 coordinates S-adenosyl-L-methionine. Lys173 contributes to the GTP binding site. S-adenosyl-L-methionine is bound at residue Met207. Residues Cys270 and Cys273 each contribute to the [4Fe-4S] cluster site. 275 to 277 (RLR) is a binding site for GTP. Cys287 serves as a coordination point for [4Fe-4S] cluster.

Belongs to the radical SAM superfamily. MoaA family. In terms of assembly, monomer and homodimer. It depends on [4Fe-4S] cluster as a cofactor.

It carries out the reaction GTP + AH2 + S-adenosyl-L-methionine = (8S)-3',8-cyclo-7,8-dihydroguanosine 5'-triphosphate + 5'-deoxyadenosine + L-methionine + A + H(+). It functions in the pathway cofactor biosynthesis; molybdopterin biosynthesis. Catalyzes the cyclization of GTP to (8S)-3',8-cyclo-7,8-dihydroguanosine 5'-triphosphate. The protein is GTP 3',8-cyclase of Aeromonas hydrophila subsp. hydrophila (strain ATCC 7966 / DSM 30187 / BCRC 13018 / CCUG 14551 / JCM 1027 / KCTC 2358 / NCIMB 9240 / NCTC 8049).